Consider the following 338-residue polypeptide: Ketol-acid reductoisomerase (NADP(+)) (338 aa).

A KARI N-terminal Rossmann domain is found at methionine 1–threonine 181. NADP(+) is bound by residues tyrosine 24–glutamine 27, arginine 47, serine 50, serine 52, and aspartate 82–glutamine 85. The active site involves histidine 107. Glycine 133 serves as a coordination point for NADP(+). Positions threonine 182 to isoleucine 327 constitute a KARI C-terminal knotted domain. The Mg(2+) site is built by aspartate 190, glutamate 194, glutamate 226, and glutamate 230. Substrate is bound at residue serine 251.

This sequence belongs to the ketol-acid reductoisomerase family. Mg(2+) is required as a cofactor.

The catalysed reaction is (2R)-2,3-dihydroxy-3-methylbutanoate + NADP(+) = (2S)-2-acetolactate + NADPH + H(+). It carries out the reaction (2R,3R)-2,3-dihydroxy-3-methylpentanoate + NADP(+) = (S)-2-ethyl-2-hydroxy-3-oxobutanoate + NADPH + H(+). Its pathway is amino-acid biosynthesis; L-isoleucine biosynthesis; L-isoleucine from 2-oxobutanoate: step 2/4. It participates in amino-acid biosynthesis; L-valine biosynthesis; L-valine from pyruvate: step 2/4. In terms of biological role, involved in the biosynthesis of branched-chain amino acids (BCAA). Catalyzes an alkyl-migration followed by a ketol-acid reduction of (S)-2-acetolactate (S2AL) to yield (R)-2,3-dihydroxy-isovalerate. In the isomerase reaction, S2AL is rearranged via a Mg-dependent methyl migration to produce 3-hydroxy-3-methyl-2-ketobutyrate (HMKB). In the reductase reaction, this 2-ketoacid undergoes a metal-dependent reduction by NADPH to yield (R)-2,3-dihydroxy-isovalerate. This Psychrobacter cryohalolentis (strain ATCC BAA-1226 / DSM 17306 / VKM B-2378 / K5) protein is Ketol-acid reductoisomerase (NADP(+)).